The primary structure comprises 507 residues: Protein DETOXIFICATION 41 (507 aa).

At 1-62 (MSSTETYEPL…KLLWTLSGAS (62 aa)) the chain is on the cytoplasmic side. Residues 63 to 83 (IVVSVLNYMLSFVTVMFTGHL) traverse the membrane as a helical segment. The Vacuolar portion of the chain corresponds to 84-92 (GSLQLAGAS). Residues 93-113 (IATVGIQGLAYGIMLGMASAV) traverse the membrane as a helical segment. Over 114–137 (QTVCGQAYGARQYSSMGIICQRAM) the chain is Cytoplasmic. The helical transmembrane segment at 138 to 158 (VLHLAAAVFLTFLYWYSGPIL) threads the bilayer. Over 159-170 (KTMGQSVAIAHE) the chain is Vacuolar. Residues 171–191 (GQIFARGMIPQIYAFALACPM) traverse the membrane as a helical segment. Over 192-202 (QRFLQAQNIVN) the chain is Cytoplasmic. The helical transmembrane segment at 203–223 (PLAYMSLGVFLLHTLLTWLVT) threads the bilayer. A topological domain (vacuolar) is located at residue N224. Residues 225–245 (VLDFGLLGAALILSFSWWLLV) traverse the membrane as a helical segment. The Cytoplasmic portion of the chain corresponds to 246–283 (AVNGMYILMSPNCKETWTGFSTRAFRGIWPYFKLTVAS). Residues 284–304 (AVMLCLEIWYNQGLVIISGLL) form a helical membrane-spanning segment. The Vacuolar portion of the chain corresponds to 305 to 312 (SNPTISLD). A helical transmembrane segment spans residues 313-333 (AISICMYYLNWDMQFMLGLSA). At 334 to 355 (AISVRVSNELGAGNPRVAMLSV) the chain is on the cytoplasmic side. Residues 356–376 (VVVNITTVLISSVLCVIVLVF) form a helical membrane-spanning segment. The Vacuolar portion of the chain corresponds to 377–389 (RVGLSKAFTSDAE). Residues 390-410 (VIAAVSDLFPLLAVSIFLNGI) form a helical membrane-spanning segment. Residues 411–425 (QPILSGVAIGSGWQA) are Cytoplasmic-facing. The chain crosses the membrane as a helical span at residues 426–446 (VVAYVNLVTYYVIGLPIGCVL). Residues 447 to 453 (GFKTSLG) are Vacuolar-facing. A helical transmembrane segment spans residues 454 to 474 (VAGIWWGMIAGVILQTLTLIV). The Cytoplasmic portion of the chain corresponds to 475-507 (LTLKTNWTSEVENAAQRVKTSATENQEMANAGV).

Belongs to the multi antimicrobial extrusion (MATE) (TC 2.A.66.1) family. In terms of tissue distribution, expressed in reproductive tissues, from buds to siliques. Restricted to the endothelium layer of the ovule and the seed coat.

The protein localises to the vacuole membrane. The protein operates within secondary metabolite biosynthesis; flavonoid biosynthesis. In terms of biological role, acts as a flavonoid/H(+)-antiporter that control the vacuolar sequestration of flavonoids in the seed coat endothelium. Could transport the anthocyanin cyanidin-3-O-glucoside and epicatechin 3'-O-glucoside in vitro. The polypeptide is Protein DETOXIFICATION 41 (Arabidopsis thaliana (Mouse-ear cress)).